We begin with the raw amino-acid sequence, 348 residues long: Protein pelota homolog (348 aa).

Belongs to the eukaryotic release factor 1 family. Pelota subfamily. Monomer. A divalent metal cation is required as a cofactor.

The protein resides in the cytoplasm. In terms of biological role, may function in recognizing stalled ribosomes, interact with stem-loop structures in stalled mRNA molecules, and effect endonucleolytic cleavage of the mRNA. May play a role in the release non-functional ribosomes and degradation of damaged mRNAs. Has endoribonuclease activity. The protein is Protein pelota homolog of Methanococcus aeolicus (strain ATCC BAA-1280 / DSM 17508 / OCM 812 / Nankai-3).